The sequence spans 122 residues: Holo-[acyl-carrier-protein] synthase (122 aa).

Residues Asp-8 and Glu-56 each contribute to the Mg(2+) site.

It belongs to the P-Pant transferase superfamily. AcpS family. It depends on Mg(2+) as a cofactor.

The protein resides in the cytoplasm. The enzyme catalyses apo-[ACP] + CoA = holo-[ACP] + adenosine 3',5'-bisphosphate + H(+). Its function is as follows. Transfers the 4'-phosphopantetheine moiety from coenzyme A to a Ser of acyl-carrier-protein. The chain is Holo-[acyl-carrier-protein] synthase from Salinispora arenicola (strain CNS-205).